The primary structure comprises 322 residues: Malate dehydrogenase (322 aa).

Residues 10–15 and D34 contribute to the NAD(+) site; that span reads GSGMIG. Substrate is bound by residues R83 and R89. Residues N96 and 119-121 each bind NAD(+); that span reads ITN. Substrate is bound by residues N121 and R152. The active-site Proton acceptor is H176.

Belongs to the LDH/MDH superfamily. MDH type 3 family.

It catalyses the reaction (S)-malate + NAD(+) = oxaloacetate + NADH + H(+). Its function is as follows. Catalyzes the reversible oxidation of malate to oxaloacetate. The polypeptide is Malate dehydrogenase (Mesorhizobium japonicum (strain LMG 29417 / CECT 9101 / MAFF 303099) (Mesorhizobium loti (strain MAFF 303099))).